The primary structure comprises 456 residues: tRNA-2-methylthio-N(6)-dimethylallyladenosine synthase (456 aa).

Residues 18 to 134 (KKLFIETYGC…LPDLVASVEA (117 aa)) enclose the MTTase N-terminal domain. [4Fe-4S] cluster contacts are provided by C27, C63, C98, C172, C176, and C179. The region spanning 158–390 (CGNHISGFVS…IELQNRLSAE (233 aa)) is the Radical SAM core domain. The TRAM domain maps to 393–456 (ARDVGKTFEV…SATLKGEEVF (64 aa)).

The protein belongs to the methylthiotransferase family. MiaB subfamily. In terms of assembly, monomer. The cofactor is [4Fe-4S] cluster.

The protein resides in the cytoplasm. The enzyme catalyses N(6)-dimethylallyladenosine(37) in tRNA + (sulfur carrier)-SH + AH2 + 2 S-adenosyl-L-methionine = 2-methylsulfanyl-N(6)-dimethylallyladenosine(37) in tRNA + (sulfur carrier)-H + 5'-deoxyadenosine + L-methionine + A + S-adenosyl-L-homocysteine + 2 H(+). Its function is as follows. Catalyzes the methylthiolation of N6-(dimethylallyl)adenosine (i(6)A), leading to the formation of 2-methylthio-N6-(dimethylallyl)adenosine (ms(2)i(6)A) at position 37 in tRNAs that read codons beginning with uridine. The protein is tRNA-2-methylthio-N(6)-dimethylallyladenosine synthase of Phocaeicola vulgatus (strain ATCC 8482 / DSM 1447 / JCM 5826 / CCUG 4940 / NBRC 14291 / NCTC 11154) (Bacteroides vulgatus).